The primary structure comprises 151 residues: Methylated-DNA--protein-cysteine methyltransferase (151 aa).

The active-site Nucleophile; methyl group acceptor is Cys-119.

It belongs to the MGMT family.

The protein localises to the cytoplasm. It catalyses the reaction a 6-O-methyl-2'-deoxyguanosine in DNA + L-cysteinyl-[protein] = S-methyl-L-cysteinyl-[protein] + a 2'-deoxyguanosine in DNA. The enzyme catalyses a 4-O-methyl-thymidine in DNA + L-cysteinyl-[protein] = a thymidine in DNA + S-methyl-L-cysteinyl-[protein]. Involved in the cellular defense against the biological effects of O6-methylguanine (O6-MeG) and O4-methylthymine (O4-MeT) in DNA. Repairs the methylated nucleobase in DNA by stoichiometrically transferring the methyl group to a cysteine residue in the enzyme. This is a suicide reaction: the enzyme is irreversibly inactivated. The sequence is that of Methylated-DNA--protein-cysteine methyltransferase from Saccharolobus islandicus (strain L.S.2.15 / Lassen #1) (Sulfolobus islandicus).